The chain runs to 205 residues: Orotate phosphoribosyltransferase (205 aa).

116-124 (EDIITTGGS) contacts 5-phospho-alpha-D-ribose 1-diphosphate. Residues threonine 120 and arginine 148 each contribute to the orotate site.

The protein belongs to the purine/pyrimidine phosphoribosyltransferase family. PyrE subfamily. Homodimer. Requires Mg(2+) as cofactor.

The catalysed reaction is orotidine 5'-phosphate + diphosphate = orotate + 5-phospho-alpha-D-ribose 1-diphosphate. It participates in pyrimidine metabolism; UMP biosynthesis via de novo pathway; UMP from orotate: step 1/2. In terms of biological role, catalyzes the transfer of a ribosyl phosphate group from 5-phosphoribose 1-diphosphate to orotate, leading to the formation of orotidine monophosphate (OMP). This Wolinella succinogenes (strain ATCC 29543 / DSM 1740 / CCUG 13145 / JCM 31913 / LMG 7466 / NCTC 11488 / FDC 602W) (Vibrio succinogenes) protein is Orotate phosphoribosyltransferase.